The following is a 156-amino-acid chain: 6,7-dimethyl-8-ribityllumazine synthase (156 aa).

5-amino-6-(D-ribitylamino)uracil is bound by residues Phe-23, 57 to 59 (AFE), and 81 to 83 (TVI). 86 to 87 (ST) contributes to the (2S)-2-hydroxy-3-oxobutyl phosphate binding site. His-89 serves as the catalytic Proton donor. A 5-amino-6-(D-ribitylamino)uracil-binding site is contributed by Phe-114. Residue Arg-128 participates in (2S)-2-hydroxy-3-oxobutyl phosphate binding.

This sequence belongs to the DMRL synthase family. In terms of assembly, forms an icosahedral capsid composed of 60 subunits, arranged as a dodecamer of pentamers.

The enzyme catalyses (2S)-2-hydroxy-3-oxobutyl phosphate + 5-amino-6-(D-ribitylamino)uracil = 6,7-dimethyl-8-(1-D-ribityl)lumazine + phosphate + 2 H2O + H(+). It participates in cofactor biosynthesis; riboflavin biosynthesis; riboflavin from 2-hydroxy-3-oxobutyl phosphate and 5-amino-6-(D-ribitylamino)uracil: step 1/2. Catalyzes the formation of 6,7-dimethyl-8-ribityllumazine by condensation of 5-amino-6-(D-ribitylamino)uracil with 3,4-dihydroxy-2-butanone 4-phosphate. This is the penultimate step in the biosynthesis of riboflavin. This chain is 6,7-dimethyl-8-ribityllumazine synthase, found in Shouchella clausii (strain KSM-K16) (Alkalihalobacillus clausii).